We begin with the raw amino-acid sequence, 411 residues long: Alpha-galactosidase (411 aa).

An N-terminal signal peptide occupies residues 1 to 24 (MATHYSIIGGMIIVVLLMIIGSEG). The propeptide occupies 25–47 (GRLLEKKNRTSAEAEHYNVRRYL). Asn32 carries N-linked (GlcNAc...) asparagine glycosylation. Cys68 and Cys100 form a disulfide bridge. A glycan (N-linked (GlcNAc...) asparagine) is linked at Asn145. A disulfide bridge connects residues Cys148 and Cys179. Asp177 acts as the Nucleophile in catalysis. Residue 210–214 (EWGWE) coordinates substrate. Asp232 functions as the Proton donor in the catalytic mechanism. Asn352 carries N-linked (GlcNAc...) asparagine glycosylation.

This sequence belongs to the glycosyl hydrolase 27 family.

The enzyme catalyses Hydrolysis of terminal, non-reducing alpha-D-galactose residues in alpha-D-galactosides, including galactose oligosaccharides, galactomannans and galactolipids.. Functionally, involved in the hydrolysis of the galactomannan, it splits alpha-linked galactose moieties. It is particularly suitable for the hydrolysis of guar gum to a gum with improved gelling properties. Preferentially cleaves alpha-1,6 glycoside linkages. This is Alpha-galactosidase from Cyamopsis tetragonoloba (Guar).